Consider the following 315-residue polypeptide: Probable cell division protein WhiA (315 aa).

Residues 274-308 constitute a DNA-binding region (H-T-H motif); it reads SLKNLGELIPGGPISKSGINHRLRKLNEIAEKIRA.

This sequence belongs to the WhiA family.

Its function is as follows. Involved in cell division and chromosome segregation. The chain is Probable cell division protein WhiA from Ligilactobacillus salivarius (strain UCC118) (Lactobacillus salivarius).